Here is a 137-residue protein sequence, read N- to C-terminus: Small ribosomal subunit protein uS11 (137 aa).

Residues 116–137 (EDVTPIPHDGTRPKGGRRGRRV) are disordered.

It belongs to the universal ribosomal protein uS11 family. As to quaternary structure, part of the 30S ribosomal subunit.

Located on the platform of the 30S subunit. In Pyrococcus abyssi (strain GE5 / Orsay), this protein is Small ribosomal subunit protein uS11.